Here is a 276-residue protein sequence, read N- to C-terminus: Probable endonuclease 4 (276 aa).

Residues H65, H105, E141, D175, H178, H210, D223, H225, and E255 each contribute to the Zn(2+) site.

This sequence belongs to the AP endonuclease 2 family. It depends on Zn(2+) as a cofactor.

It catalyses the reaction Endonucleolytic cleavage to 5'-phosphooligonucleotide end-products.. Endonuclease IV plays a role in DNA repair. It cleaves phosphodiester bonds at apurinic or apyrimidinic (AP) sites, generating a 3'-hydroxyl group and a 5'-terminal sugar phosphate. This chain is Probable endonuclease 4, found in Symbiobacterium thermophilum (strain DSM 24528 / JCM 14929 / IAM 14863 / T).